A 186-amino-acid chain; its full sequence is Ribosome-recycling factor (186 aa).

Belongs to the RRF family.

The protein resides in the cytoplasm. In terms of biological role, responsible for the release of ribosomes from messenger RNA at the termination of protein biosynthesis. May increase the efficiency of translation by recycling ribosomes from one round of translation to another. This Herminiimonas arsenicoxydans protein is Ribosome-recycling factor.